The primary structure comprises 94 residues: Pyrimidine/purine nucleoside phosphorylase (94 aa).

This sequence belongs to the nucleoside phosphorylase PpnP family.

It catalyses the reaction a purine D-ribonucleoside + phosphate = a purine nucleobase + alpha-D-ribose 1-phosphate. The catalysed reaction is adenosine + phosphate = alpha-D-ribose 1-phosphate + adenine. It carries out the reaction cytidine + phosphate = cytosine + alpha-D-ribose 1-phosphate. The enzyme catalyses guanosine + phosphate = alpha-D-ribose 1-phosphate + guanine. It catalyses the reaction inosine + phosphate = alpha-D-ribose 1-phosphate + hypoxanthine. The catalysed reaction is thymidine + phosphate = 2-deoxy-alpha-D-ribose 1-phosphate + thymine. It carries out the reaction uridine + phosphate = alpha-D-ribose 1-phosphate + uracil. The enzyme catalyses xanthosine + phosphate = alpha-D-ribose 1-phosphate + xanthine. Catalyzes the phosphorolysis of diverse nucleosides, yielding D-ribose 1-phosphate and the respective free bases. Can use uridine, adenosine, guanosine, cytidine, thymidine, inosine and xanthosine as substrates. Also catalyzes the reverse reactions. This is Pyrimidine/purine nucleoside phosphorylase from Psychromonas ingrahamii (strain DSM 17664 / CCUG 51855 / 37).